The sequence spans 255 residues: Tachylectin-2 (255 aa).

The N-terminal stretch at 1 to 19 (MKFLLVVLGFIGFLKDGIT) is a signal peptide. WD repeat units follow at residues 20–67 (VGGE…FLFL), 68–114 (SPGG…FLFF), 115–161 (DPNG…FLFF), 162–208 (HPNG…FLFF), and 209–255 (SSVG…FLFF).

As to quaternary structure, monomer.

Its subcellular location is the secreted. The protein resides in the cytoplasmic granule. Its function is as follows. Lectin that binds specifically to N-acetylglucosamine and N-acetylgalactosamine. Is part of the innate immunity host defense system of the horseshoe crab. The sequence is that of Tachylectin-2 from Tachypleus tridentatus (Japanese horseshoe crab).